The primary structure comprises 64 residues: Conotoxin reg3k (64 aa).

A signal peptide spans 1 to 20 (MMFKLGVLLTICLLLFPLTA). Residues 21 to 48 (LQLDWDQPGDHMLDISSEIDDRWFDPVR) constitute a propeptide that is removed on maturation. 3 disulfide bridges follow: cysteine 50–cysteine 60, cysteine 51–cysteine 58, and cysteine 56–cysteine 61. Proline 59 is modified (4-hydroxyproline).

In terms of tissue distribution, expressed by the venom duct.

The protein resides in the secreted. The sequence is that of Conotoxin reg3k from Conus regius (Crown cone).